The sequence spans 213 residues: Orotidine 5'-phosphate decarboxylase (213 aa).

Substrate-binding positions include D6, K25, 52–61, S109, 158–168, G181, and R182; these read DLKLADIDNT and PGVGAQGAMIG. The active-site Proton donor is the K54.

This sequence belongs to the OMP decarboxylase family. Type 1 subfamily. In terms of assembly, homodimer.

The catalysed reaction is orotidine 5'-phosphate + H(+) = UMP + CO2. It participates in pyrimidine metabolism; UMP biosynthesis via de novo pathway; UMP from orotate: step 2/2. Its function is as follows. Catalyzes the decarboxylation of orotidine 5'-monophosphate (OMP) to uridine 5'-monophosphate (UMP). The protein is Orotidine 5'-phosphate decarboxylase of Sulfurisphaera tokodaii (strain DSM 16993 / JCM 10545 / NBRC 100140 / 7) (Sulfolobus tokodaii).